A 176-amino-acid chain; its full sequence is Neuropeptide-like protein 1 (176 aa).

Residues 1 to 19 (MKATFVLACLLVIAAVSHA) form the signal peptide. A disordered region spans residues 59 to 79 (GKRSAEQNEQANKEDKATSDK). Residues 61–79 (RSAEQNEQANKEDKATSDK) are compositionally biased toward basic and acidic residues.

Functionally, in AWC olfactory sensory neurons, required for the detection of preferred food sources. In Caenorhabditis elegans, this protein is Neuropeptide-like protein 1 (nlp-1).